The following is a 473-amino-acid chain: Trigger factor (473 aa).

The 82-residue stretch at 162 to 243 folds into the PPIase FKBP-type domain; that stretch reads GDFVSIDLSA…VKSIKVRELP (82 aa). The tract at residues 433 to 473 is disordered; the sequence is TAEFFGPSGEQAEAEQDEAAPAEDATEETDADSDEAADDSK. A compositionally biased stretch (acidic residues) spans 444 to 473; sequence AEAEQDEAAPAEDATEETDADSDEAADDSK.

This sequence belongs to the FKBP-type PPIase family. Tig subfamily.

It is found in the cytoplasm. The catalysed reaction is [protein]-peptidylproline (omega=180) = [protein]-peptidylproline (omega=0). Involved in protein export. Acts as a chaperone by maintaining the newly synthesized protein in an open conformation. Functions as a peptidyl-prolyl cis-trans isomerase. This is Trigger factor from Mycolicibacterium vanbaalenii (strain DSM 7251 / JCM 13017 / BCRC 16820 / KCTC 9966 / NRRL B-24157 / PYR-1) (Mycobacterium vanbaalenii).